Reading from the N-terminus, the 431-residue chain is 3'3'-cGAMP-specific phosphodiesterase 1 (431 aa).

Residues 39–155 (DINHGHRVGY…IFLADRVDYL (117 aa)) enclose the HD domain. The 197-residue stretch at 231 to 427 (GVEEIMSIAM…YYQLSIAESP (197 aa)) folds into the HD-GYP domain. Residues histidine 288 and aspartate 289 each coordinate a divalent metal cation. The active-site Proton donor is the lysine 292. Positions 317, 341, 342, and 370 each coordinate a divalent metal cation.

In terms of assembly, monomer. Requires Ca(2+) as cofactor. It depends on Mg(2+) as a cofactor.

It carries out the reaction 3',3'-cGAMP + H2O = 5'-pApG-3' + H(+). It catalyses the reaction 5'-pApG-3' + H2O = 5'-ApG-3' + phosphate. Its function is as follows. Phosphodiesterase (PDE) that catalyzes the hydrolysis of 3'3'-cyclic GMP-AMP (3'3'-cGAMP), leading to linear 5'-pApG. Also displays 5'-nucleotidase activity, further hydrolyzing 5'-pApG to 5'-ApG. Counteracts the function of the 3'3'-cGAMP synthase DncV, and is involved in the modulation of intracellular 3'3'-cGAMP levels. Enhances bacterial chemotaxis and inhibits intestinal colonization in vivo. Thus exerts a crucial role in regulating bacterial infectivity through catalyzing 3'3'-cGAMP degradation. Is specific for 3'3'-cGAMP since it cannot degrade other cGAMP linkage isomers (3'2'-, 2'3'-, and 2'2'-cGAMPs). Is also able to hydrolyze c-di-GMP but not c-di-AMP. The protein is 3'3'-cGAMP-specific phosphodiesterase 1 of Vibrio cholerae serotype O1 (strain ATCC 39315 / El Tor Inaba N16961).